The sequence spans 195 residues: dITP/XTP pyrophosphatase (195 aa).

Residue T9–K14 coordinates substrate. Residues E41 and D70 each coordinate Mg(2+). D70 serves as the catalytic Proton acceptor. Substrate contacts are provided by residues S71, F155–D158, K178, and H183–R184.

This sequence belongs to the HAM1 NTPase family. Homodimer. The cofactor is Mg(2+).

The enzyme catalyses XTP + H2O = XMP + diphosphate + H(+). The catalysed reaction is dITP + H2O = dIMP + diphosphate + H(+). It catalyses the reaction ITP + H2O = IMP + diphosphate + H(+). Pyrophosphatase that catalyzes the hydrolysis of nucleoside triphosphates to their monophosphate derivatives, with a high preference for the non-canonical purine nucleotides XTP (xanthosine triphosphate), dITP (deoxyinosine triphosphate) and ITP. Seems to function as a house-cleaning enzyme that removes non-canonical purine nucleotides from the nucleotide pool, thus preventing their incorporation into DNA/RNA and avoiding chromosomal lesions. The sequence is that of dITP/XTP pyrophosphatase from Haemophilus influenzae (strain ATCC 51907 / DSM 11121 / KW20 / Rd).